Here is a 258-residue protein sequence, read N- to C-terminus: MEGKEEDVRLGANKFTERQPIGTAAQSQDKDYKEPPPAPLFEPGELSSWSFYRAGIAEFVATFLFLYITILTVMGVVKSSTKCSTVGIQGIAWAFGGMIFALVYCTAGISGGHINPAVTFGLFLARKLSLTRALFYMVMQCLGAICGAGVVKGFQKGLYENNGGGANVVAPGYTKGDGLGAEIVGTFILVYTVFSATDAKRSARDSHVPILAPLPIGFAVFLVHLATIPITGTGINPARSLGAAIIYNKGHAWDDHWI.

Residues 1 to 37 (MEGKEEDVRLGANKFTERQPIGTAAQSQDKDYKEPPP) are disordered. Topologically, residues 1 to 55 (MEGKEEDVRLGANKFTERQPIGTAAQSQDKDYKEPPPAPLFEPGELSSWSFYRAG) are cytoplasmic. A helical transmembrane segment spans residues 56–76 (IAEFVATFLFLYITILTVMGV). Residues 77-89 (VKSSTKCSTVGIQ) lie on the Extracellular side of the membrane. Residues 90 to 110 (GIAWAFGGMIFALVYCTAGIS) form a helical membrane-spanning segment. The Cytoplasmic portion of the chain corresponds to 111-133 (GGHINPAVTFGLFLARKLSLTRA). Positions 115–117 (NPA) match the NPA 1 motif. A helical membrane pass occupies residues 134–154 (LFYMVMQCLGAICGAGVVKGF). Topologically, residues 155–175 (QKGLYENNGGGANVVAPGYTK) are extracellular. The helical transmembrane segment at 176 to 196 (GDGLGAEIVGTFILVYTVFSA) threads the bilayer. Residues 197–209 (TDAKRSARDSHVP) lie on the Cytoplasmic side of the membrane. Residues 210–230 (ILAPLPIGFAVFLVHLATIPI) traverse the membrane as a helical segment. Topologically, residues 231-258 (TGTGINPARSLGAAIIYNKGHAWDDHWI) are extracellular. Positions 236-238 (NPA) match the NPA 2 motif.

It belongs to the MIP/aquaporin (TC 1.A.8) family. PIP (TC 1.A.8.11) subfamily. As to expression, barely detectable in roots, leaves and fruits.

It is found in the cell membrane. Functionally, water channel required to facilitate the transport of water across cell membrane; mercury-insensitive. Contributes to the tolerance to multiple abiotic stresses including salt (NaCl), cold and water deprivation, by modulating cytosolic K(+)/Na(+) ratio, maintaining osmotic balance, and reducing membrane injury (e.g. oxidative injury). In Musa acuminata (Banana), this protein is Aquaporin PIP1-2.